A 496-amino-acid chain; its full sequence is Autophagy-related protein 21 (496 aa).

The tract at residues 41–86 (SKKKTSNNNGSASNSESRNNEESILITNGSRDRTDAEEEEDNEDNA) is disordered. A compositionally biased stretch (low complexity) spans 46–57 (SNNNGSASNSES). Residues 75–84 (DAEEEEDNED) are compositionally biased toward acidic residues. Thr-213 bears the Phosphothreonine mark. Ser-237 is modified (phosphoserine). WD repeat units follow at residues 294-334 (VHKG…DYMS), 346-385 (TRLC…NSLP), and 448-488 (VNES…GECV). The short motif at 342–346 (FRRGT) is the L/FRRG motif element.

The protein belongs to the WD repeat PROPPIN family.

It is found in the cytoplasm. It localises to the vacuole. Required for cytoplasm to vacuole transport (Cvt) vesicles formation and mitophagy. Involved in binding of phosphatidylethanolamine to ATG8 and in recruitment of ATG8 and ATG5 to the pre-autophagosomal structure. Protects ATG8 from ARG4-mediated cleavage. Essential for maturation of proaminopeptidase I. The sequence is that of Autophagy-related protein 21 (ATG21) from Saccharomyces cerevisiae (strain ATCC 204508 / S288c) (Baker's yeast).